The chain runs to 92 residues: Small ribosomal subunit protein uS19 (92 aa).

This sequence belongs to the universal ribosomal protein uS19 family.

Functionally, protein S19 forms a complex with S13 that binds strongly to the 16S ribosomal RNA. The polypeptide is Small ribosomal subunit protein uS19 (Mesorhizobium japonicum (strain LMG 29417 / CECT 9101 / MAFF 303099) (Mesorhizobium loti (strain MAFF 303099))).